The chain runs to 255 residues: Imidazole glycerol phosphate synthase subunit HisF (255 aa).

Catalysis depends on residues Asp-11 and Asp-130.

The protein belongs to the HisA/HisF family. As to quaternary structure, heterodimer of HisH and HisF.

The protein localises to the cytoplasm. The catalysed reaction is 5-[(5-phospho-1-deoxy-D-ribulos-1-ylimino)methylamino]-1-(5-phospho-beta-D-ribosyl)imidazole-4-carboxamide + L-glutamine = D-erythro-1-(imidazol-4-yl)glycerol 3-phosphate + 5-amino-1-(5-phospho-beta-D-ribosyl)imidazole-4-carboxamide + L-glutamate + H(+). It functions in the pathway amino-acid biosynthesis; L-histidine biosynthesis; L-histidine from 5-phospho-alpha-D-ribose 1-diphosphate: step 5/9. In terms of biological role, IGPS catalyzes the conversion of PRFAR and glutamine to IGP, AICAR and glutamate. The HisF subunit catalyzes the cyclization activity that produces IGP and AICAR from PRFAR using the ammonia provided by the HisH subunit. The polypeptide is Imidazole glycerol phosphate synthase subunit HisF (Rhodopseudomonas palustris (strain BisB5)).